The following is a 411-amino-acid chain: Protein PHLOEM PROTEIN 2-LIKE A5 (411 aa).

Residues 20-157 (TGPQVFINFR…KWTEALFSVC (138 aa)) form the TIR domain. E94 is an active-site residue.

It catalyses the reaction NAD(+) + H2O = ADP-D-ribose + nicotinamide + H(+). In Arabidopsis thaliana (Mouse-ear cress), this protein is Protein PHLOEM PROTEIN 2-LIKE A5 (PP2A5).